Consider the following 763-residue polypeptide: Transferrin receptor protein 1 (763 aa).

The Cytoplasmic segment spans residues 1–67 (MMDQARSAFS…KPKRFNGRLC (67 aa)). The segment at 1–67 (MMDQARSAFS…KPKRFNGRLC (67 aa)) is mediates interaction with SH3BP4. Residues serine 10 and serine 19 each carry the phosphoserine modification. Tyrosine 20 is subject to Phosphotyrosine. The Endocytosis signal motif lies at 20 to 23 (YTRF). Position 21 is a phosphothreonine (threonine 21). The residue at position 24 (serine 24) is a Phosphoserine. The short motif at 58–61 (KPKR) is the Stop-transfer sequence element. Residue cysteine 67 is the site of S-palmitoyl cysteine attachment. The helical; Signal-anchor for type II membrane protein transmembrane segment at 68–88 (FAAIALVIFFLIGFMSGYLGY) threads the bilayer. Residues 89 to 763 (CKRVEQKEEC…GDIWNIDNEF (675 aa)) lie on the Extracellular side of the membrane. An O-linked (GalNAc...) threonine glycan is attached at threonine 104. Residues 225–315 (SKPTEVSGKL…GTGDPYTPGF (91 aa)) form the PA domain. Asparagine 253 and asparagine 319 each carry an N-linked (GlcNAc...) asparagine glycan. The ligand-binding stretch occupies residues 572-763 (RLDTYEALTQ…GDIWNIDNEF (192 aa)). Residues 649 to 651 (RGD) carry the Cell attachment site motif. N-linked (GlcNAc...) asparagine glycans are attached at residues asparagine 725 and asparagine 730.

Belongs to the peptidase M28 family. M28B subfamily. Homodimer; disulfide-linked. Binds one transferrin molecule per subunit. Interacts with SH3BP4. Interacts with STEAP3; facilitates TFRC endocytosis in erythroid precursor cells. Stearoylated by ZDHHC6 which inhibits TFRC-mediated activation of the JNK pathway and promotes mitochondrial fragmentation. Stearoylation does not affect iron uptake. In terms of processing, N- and O-glycosylated, phosphorylated and palmitoylated.

Its subcellular location is the cell membrane. The protein localises to the melanosome. In terms of biological role, cellular uptake of iron occurs via receptor-mediated endocytosis of ligand-occupied transferrin receptor into specialized endosomes. Endosomal acidification leads to iron release. The apotransferrin-receptor complex is then recycled to the cell surface with a return to neutral pH and the concomitant loss of affinity of apotransferrin for its receptor. Transferrin receptor is necessary for development of erythrocytes and the nervous system. Upon stimulation, positively regulates T and B cell proliferation through iron uptake. Acts as a lipid sensor that regulates mitochondrial fusion by regulating activation of the JNK pathway. When dietary levels of stearate (C18:0) are low, promotes activation of the JNK pathway, resulting in HUWE1-mediated ubiquitination and subsequent degradation of the mitofusin MFN2 and inhibition of mitochondrial fusion. When dietary levels of stearate (C18:0) are high, TFRC stearoylation inhibits activation of the JNK pathway and thus degradation of the mitofusin MFN2. Mediates uptake of NICOL1 into fibroblasts where it may regulate extracellular matrix production. The protein is Transferrin receptor protein 1 (Tfrc) of Mus musculus (Mouse).